The following is a 961-amino-acid chain: Retinoblastoma-related protein 1 (961 aa).

A domain A region spans residues 404 to 606; sequence TPVSTAMTTA…EKGSSMYNSL (203 aa). The pocket stretch occupies residues 404 to 819; sequence TPVSTAMTTA…NEMFIPSVKP (416 aa). Positions 607 to 728 are spacer; that stretch reads AVAKPSLAAE…PGGGGETCAE (122 aa). The tract at residues 729–819 is domain B; that stretch reads TAINVFFGKI…NEMFIPSVKP (91 aa). The interval 829-856 is disordered; it reads NAEKNNHNDGQGPASPKPSPFPKLPDMS.

This sequence belongs to the retinoblastoma protein (RB) family.

It is found in the nucleus. Regulator of biological processes that recruits a histone deacetylase to control gene transcription. May play a role in the entry into mitosis, negatively regulating the cell proliferation. Formation of stable complexes with geminiviridae replication-associated proteins may create a cellular environment which favors viral DNA replication. This chain is Retinoblastoma-related protein 1 (RB1), found in Nicotiana tabacum (Common tobacco).